Reading from the N-terminus, the 215-residue chain is Transmembrane protein 267 (215 aa).

Helical transmembrane passes span 77–97 (FGEVLLAGFLASVIDVDHFFQ), 114–134 (FLHCSTVIPIAVLSVKLAVHL), and 178–198 (SSFYVISTLSLPHLCSFLMYL).

Its subcellular location is the membrane. This Mus musculus (Mouse) protein is Transmembrane protein 267.